A 345-amino-acid polypeptide reads, in one-letter code: Tyrosine-binding protein (345 aa).

Positions 1 to 23 (MIKSKKILSLIIAGVLGVSMLTG) are cleaved as a signal peptide. The N-palmitoyl cysteine moiety is linked to residue Cys-24. Cys-24 is lipidated: S-diacylglycerol cysteine.

The complex is probably composed of two ATP-binding proteins (CDR20291_0806), two transmembrane proteins (CDR20291_0807) and a solute-binding protein (CDR20291_0805).

The protein resides in the cell membrane. In terms of biological role, probably part of an ABC transporter complex involved in tyrosine uptake. May also import phenylalanine. The chain is Tyrosine-binding protein from Clostridioides difficile (strain R20291) (Peptoclostridium difficile).